A 258-amino-acid polypeptide reads, in one-letter code: Coiled-coil domain-containing protein 127 (258 aa).

Positions 50 to 170 (KEIEKEKEAC…EEALAERQSI (121 aa)) form a coiled coil.

The chain is Coiled-coil domain-containing protein 127 (CCDC127) from Sus scrofa (Pig).